Reading from the N-terminus, the 369-residue chain is Probable peptidoglycan glycosyltransferase FtsW (369 aa).

8 helical membrane passes run 11 to 31 (LLSVTIILLIFSIIMVGSSSV), 48 to 68 (NFIHSIISILCMIFVFNVPIY), 77 to 97 (LILCSIILLLTLNYFGISNHG), 134 to 151 (TSTIQLISIILIVSKLLL), 154 to 174 (PDFGTLVILYSSLLFMLFLIG), 177 to 197 (FLFLSASSAIFTTIVLSLIYF), 265 to 285 (LGYLGIAMIVISLFFIFFQGM), and 306 to 326 (ISLLIIIQSIINIGSSIGILP).

The protein belongs to the SEDS family. FtsW subfamily.

The protein resides in the cell inner membrane. It carries out the reaction [GlcNAc-(1-&gt;4)-Mur2Ac(oyl-L-Ala-gamma-D-Glu-L-Lys-D-Ala-D-Ala)](n)-di-trans,octa-cis-undecaprenyl diphosphate + beta-D-GlcNAc-(1-&gt;4)-Mur2Ac(oyl-L-Ala-gamma-D-Glu-L-Lys-D-Ala-D-Ala)-di-trans,octa-cis-undecaprenyl diphosphate = [GlcNAc-(1-&gt;4)-Mur2Ac(oyl-L-Ala-gamma-D-Glu-L-Lys-D-Ala-D-Ala)](n+1)-di-trans,octa-cis-undecaprenyl diphosphate + di-trans,octa-cis-undecaprenyl diphosphate + H(+). It functions in the pathway cell wall biogenesis; peptidoglycan biosynthesis. Functionally, peptidoglycan polymerase that is essential for cell division. This chain is Probable peptidoglycan glycosyltransferase FtsW, found in Riesia pediculicola (strain USDA).